A 267-amino-acid polypeptide reads, in one-letter code: Small ribosomal subunit protein uS2 (267 aa).

The interval 225-267 (LREQELEGEEQEEAAPATEEEKKELIEEAVAEGEAEETEEEEK) is disordered. Residues 251 to 267 (EEAVAEGEAEETEEEEK) are compositionally biased toward acidic residues.

Belongs to the universal ribosomal protein uS2 family.

This chain is Small ribosomal subunit protein uS2, found in Nitratiruptor sp. (strain SB155-2).